Here is a 52-residue protein sequence, read N- to C-terminus: Superoxide dismutase [Cu-Zn] 2 (52 aa).

Residue His-44 participates in Cu cation binding.

Belongs to the Cu-Zn superoxide dismutase family. Homodimer. The cofactor is Cu cation. It depends on Zn(2+) as a cofactor.

The protein resides in the cytoplasm. It catalyses the reaction 2 superoxide + 2 H(+) = H2O2 + O2. Functionally, destroys radicals which are normally produced within the cells and which are toxic to biological systems. This is Superoxide dismutase [Cu-Zn] 2 from Debaryomyces hansenii (Yeast).